The primary structure comprises 261 residues: tRNA U34 carboxymethyltransferase (261 aa).

Carboxy-S-adenosyl-L-methionine-binding positions include lysine 25, tryptophan 39, lysine 44, glycine 63, 114-115 (VE), tyrosine 135, and arginine 250.

Belongs to the class I-like SAM-binding methyltransferase superfamily. CmoB family. As to quaternary structure, homotetramer.

The enzyme catalyses carboxy-S-adenosyl-L-methionine + 5-hydroxyuridine(34) in tRNA = 5-carboxymethoxyuridine(34) in tRNA + S-adenosyl-L-homocysteine + H(+). Its function is as follows. Catalyzes carboxymethyl transfer from carboxy-S-adenosyl-L-methionine (Cx-SAM) to 5-hydroxyuridine (ho5U) to form 5-carboxymethoxyuridine (cmo5U) at position 34 in tRNAs. The chain is tRNA U34 carboxymethyltransferase from Helicobacter pylori (strain P12).